Here is a 250-residue protein sequence, read N- to C-terminus: Complement factor B-like protease (250 aa).

Sushi domains are found at residues 3 to 73 (TRCD…KCRA), 74 to 133 (VWCP…VCDD), and 136 to 193 (GDCP…QCRA). 6 disulfide bridges follow: C5–C44, C30–C71, C76–C118, C104–C131, C138–C178, and C164–C191. A glycan (N-linked (GlcNAc...) asparagine) is linked at N115. N221 carries an N-linked (GlcNAc...) asparagine glycan.

The protein belongs to the peptidase S1 family. Plasma.

The protein resides in the secreted. Its function is as follows. Required in both the classical and alternate pathways of the complement system. This chain is Complement factor B-like protease, found in Gallus gallus (Chicken).